The following is a 337-amino-acid chain: Anthranilate phosphoribosyltransferase (337 aa).

5-phospho-alpha-D-ribose 1-diphosphate contacts are provided by residues Gly-81, 84–85 (GD), Ser-89, 91–94 (NVST), 109–117 (KHGNRAASS), and Ala-121. Gly-81 is a binding site for anthranilate. Residue Ser-93 participates in Mg(2+) binding. Position 112 (Asn-112) interacts with anthranilate. Arg-167 is a binding site for anthranilate. Asp-226 and Glu-227 together coordinate Mg(2+).

It belongs to the anthranilate phosphoribosyltransferase family. Homodimer. It depends on Mg(2+) as a cofactor.

The enzyme catalyses N-(5-phospho-beta-D-ribosyl)anthranilate + diphosphate = 5-phospho-alpha-D-ribose 1-diphosphate + anthranilate. It functions in the pathway amino-acid biosynthesis; L-tryptophan biosynthesis; L-tryptophan from chorismate: step 2/5. In terms of biological role, catalyzes the transfer of the phosphoribosyl group of 5-phosphorylribose-1-pyrophosphate (PRPP) to anthranilate to yield N-(5'-phosphoribosyl)-anthranilate (PRA). The chain is Anthranilate phosphoribosyltransferase from Methylobacterium sp. (strain 4-46).